A 103-amino-acid chain; its full sequence is Small ribosomal subunit protein uS10 (103 aa).

Belongs to the universal ribosomal protein uS10 family. In terms of assembly, part of the 30S ribosomal subunit.

Functionally, involved in the binding of tRNA to the ribosomes. This is Small ribosomal subunit protein uS10 from Clostridioides difficile (strain 630) (Peptoclostridium difficile).